We begin with the raw amino-acid sequence, 1297 residues long: MELYFGEYQHVQQEYGVHLRLASGDTPKPRNSQPSKAGSYGVSIRVQGIDGHPYIVLNNTERCLAGTPFPENAPSFPSSVINNLSLHPSNGTVLKENTPEELQLPENPYLQTSPLRGQKQFSLHEGRNGVLERKDGPTKLPHVLNFQRHPELLQPYDPEKNEVNAKKHHPPESPWLRNATEDGTNCKKSRNCFPKSYGSQPNSPTSEDLAKTNMTAIRLCSSVVIEDPQKQTSVCVNVQRCAKEGVGEETLSPRRKSPTAPSPQAYSETKKNRPDVLPFRRQDSAGPILDGARSRRSSSSSTTPTSATSLYKFLLDDQECAIHADSVNRHENRRYIPFLPGTGRDIDTCSIPGVDQLIEKFDQKPGLQRRGRSGKRNRINPDDRKRSRSVDSAFPFGLQGNTEYLTEFSRNLGKSSEHLLRPSQVFPQRSVAQEHRGKHSPSSPPAKLQGAQGAHPKPPLQNKDGKVLNKGRQESTGACAPSLPAPNKKEEEIKIATATLMLQNRAVAATSDSGAKKISVKTFPSDSSTQATPDLLKGQQELTQQTNEETAKQILYNYLKEGGTDNEDATKRKVNLVFEKIQTLKSRAAGSAQGSNQAPNSPSEGNSLLDQKNKLILEVSELQQQLQLEMKNQQNIKEERERMREDLEELRVRHQSQVEETATLQRRLEESEGELRKSLEELFQVKMEREQHQTEIRDLQDQLSEMHDELDSTKRSEDREKGALIEELLQAKQDLQDLLIAKEEQEDLLRKRERELTALKGALKEEVSSHDQEMDKLKEQYDAELQALRESVEEATKNVEVLASRSNSSEQSQAEADLREKVLKEENEKLQGRIAELERRAAQLQRQMEDVKGDEAQAKETLRKCESEVQQLEEALVHARKEEKEATCARRALEKELEQARRELSQVSQEQKELLEKLRDEAEQKEQLRKLKNEMESERWHLDKTIEKLQKEMADIAEASRTSSLELQKQLGEYKEKNRRELAEMQTQLKEKCLEVEKARLAASKMQDELRLKEEELQDYQRAEEEALTKRQLLEQSLKDLEYELEAKSHLKDDRSRLIKQMEDKVSQLEIELEEERTNADLLSERITWSREQMEQMRSELLQEKAAKQDLECDKISLERQNKDLKSRIIHLEGSYRSSKEGLVVQMEARIAELEDRLENEERDRANLQLSNRRLERKVKELVMQVDDEHLSLTDQKDQLSLRLKAMKRQVEEAEEEIDRLESSKKKLQRELEEQMGVNEQLQGQLNSLKKGLRLKTLSSKVLDDSDDDDLSSDAGSLYEAPLSYAFPKDSTIASQI.

The tract at residues 1–550 is head; the sequence is MELYFGEYQH…ELTQQTNEET (550 aa). The ZIM motif lies at 37-51; sequence AGSYGVSIRVQGIDG. Phosphoserine occurs at positions 113, 203, and 257. Disordered regions lie at residues 161–208, 245–306, 364–396, and 428–467; these read NEVN…TSED, GVGE…TPTS, KPGL…AFPF, and QRSV…DGKV. The segment covering 197 to 206 has biased composition (polar residues); the sequence is YGSQPNSPTS. Residues 268–283 show a composition bias toward basic and acidic residues; the sequence is ETKKNRPDVLPFRRQD. Phosphoserine is present on residues Ser284, Ser298, and Ser299. Residues 297–306 are compositionally biased toward low complexity; sequence SSSSSTTPTS. Over residues 367-378 the composition is skewed to basic residues; the sequence is LQRRGRSGKRNR. Basic and acidic residues predominate over residues 379–389; that stretch reads INPDDRKRSRS. Residues Ser389 and Ser392 each carry the phosphoserine modification. Ser482 carries the post-translational modification Phosphoserine. Positions 586–608 are disordered; that stretch reads SRAAGSAQGSNQAPNSPSEGNSL. Positions 592 to 608 are enriched in polar residues; it reads AQGSNQAPNSPSEGNSL. Residues 604–1251 are a coiled coil; that stretch reads EGNSLLDQKN…LQGQLNSLKK (648 aa). Phosphoserine occurs at positions 678 and 704. Positions 1259–1297 are tail; that stretch reads SSKVLDDSDDDDLSSDAGSLYEAPLSYAFPKDSTIASQI.

It belongs to the cingulin family. As to quaternary structure, homodimer or oligomer. Interacts with CD2AP and SH3BP1; probably part of a complex at cell junctions. As to expression, widely expressed. Highly expressed in the kidney and lung.

The protein resides in the cell junction. It is found in the tight junction. In terms of biological role, may be involved in anchoring the apical junctional complex, especially tight junctions, to actin-based cytoskeletons. In Mus musculus (Mouse), this protein is Cingulin-like protein 1.